The chain runs to 270 residues: Ribitol operon repressor (270 aa).

Positions M1–S61 constitute an HTH lacI-type domain. Positions I6–N25 form a DNA-binding region, H-T-H motif.

Functionally, repressor for the genes of the ribitol operon. Binds D-ribulose as an inducer. This Klebsiella aerogenes (Enterobacter aerogenes) protein is Ribitol operon repressor (rbtR).